Here is a 139-residue protein sequence, read N- to C-terminus: MGSNSLSMIKVRLQNLFDNDEVALLKITCYTDKLIHLTNALAKAVIHTIKLNGIVFVHVITSSDICPNNNIVVKSNFTTMPVLQNGGYIWEMMELTHCSQPNGLLDDNCEIKFSKKLSDSTMTNYMNQLSELLGFDLNP.

The DLNP; interaction with MAP1B motif lies at 136–139; the sequence is DLNP.

It belongs to the pneumovirus non-structural protein 1 family. As to quaternary structure, monomer. Homomultimer. Heteromultimer with NS2. Interacts with the matrix protein M. Interacts with host ELOC and CUL2; this interaction allows NS1 to form an active E3 ligase with ELOC and CUL2. Interacts with host IRF3; this interaction leads to the disrupted association of IRF3 with CREBBP and thus reduced binding of IRF3 to the IFN-beta promoter. Interacts with host MAVS; this interaction prevents MAVS binding to RIGI and inhibits signaling pathway leading to interferon production. Interacts with host MAP1B/microtubule-associated protein 1B. Interacts with host TRIM25 (via SPRY domain); this interaction suppresses RIGI ubiquitination and results in decreased interaction between RIGI and MAVS.

It is found in the host cytoplasm. The protein localises to the host mitochondrion. It localises to the host nucleus. In terms of biological role, plays a major role in antagonizing the type I IFN-mediated antiviral response by degrading or inhibiting multiple cellular factors required for either IFN induction or response pathways. Acts cooperatively with NS2 to repress activation and nuclear translocation of host IFN-regulatory factor IRF3. Also disrupts the association of IRF3 with CREBBP. Interacts with host mitochondrial-associated membrane (MAM) MAVS and prevents the interaction with RIGI. Interacts with TRIM25 to suppress TRIM25-mediated RIGI ubiquitination and thereby RIGI-MAVS interaction. Together with NS2, participates in the proteasomal degradation of host STAT2, IRF3, IRF7, TBK1 and RIGI through a NS-degradasome involving CUL2 and Elongin-C. The degradasome requires an intact mitochondrial MAVS. Decreases the levels of host TRAF3 and IKBKE/IKK-epsilon. As functions other than disruptions of the type I IFN-mediated antiviral signaling pathways, induces host SOCS1 and SOCS3 expression. Suppresses premature apoptosis by an NF-kappa-B-dependent, interferon-independent mechanism and thus facilitates virus growth. Additionally, NS1 may serve some inhibitory role in viral transcription and RNA replication. Suppresses proliferation and activation of host CD103+ CD8+ cytotoxic T-lymphocytes and Th17 helper T-lymphocytes. The protein is Non-structural protein 1 (1C) of Homo sapiens (Human).